Reading from the N-terminus, the 1752-residue chain is Serine protease/ABC transporter B family protein tagA (1752 aa).

The signal sequence occupies residues 1-24; that stretch reads MNKKLFIFGLSLFLFLFIFNLSLS. Residue asparagine 20 is glycosylated (N-linked (GlcNAc...) asparagine). The region spanning 280–696 is the Peptidase S8 domain; sequence HYSIQSGSAS…FGNIQLSKLI (417 aa). Active-site charge relay system residues include aspartate 312 and histidine 352. N-linked (GlcNAc...) asparagine glycosylation is found at asparagine 400 and asparagine 557. Serine 625 acts as the Charge relay system in catalysis. 3 N-linked (GlcNAc...) asparagine glycosylation sites follow: asparagine 653, asparagine 785, and asparagine 823. The chain crosses the membrane as a helical span at residues 909-929; it reads IVLLGIFGIIIVGAVIFVLVC. A disordered region spans residues 946-1032; it reads DKGGDGNSIR…QNNSPQYDED (87 aa). Residues 962-994 are compositionally biased toward low complexity; it reads NNNNNNNNNNNNNNNNNNNNNNNNNNNNNNNNN. The N-linked (GlcNAc...) asparagine glycan is linked to asparagine 993. The segment covering 995-1004 has biased composition (polar residues); the sequence is SNGKQSNIEL. The segment covering 1013-1028 has biased composition (low complexity); it reads GTPNGDDQQQQNNSPQ. Transmembrane regions (helical) follow at residues 1058-1078, 1102-1122, 1174-1194, 1200-1220, 1285-1305, and 1315-1335; these read ILGL…AVPL, FALI…LLAL, IPHM…LFII, LVVL…GGYI, TSGI…SSLV, and LIAF…VASL. In terms of domain architecture, ABC transmembrane type-1 spans 1059–1341; sequence LGLALFLSFI…VASLYTTYKS (283 aa). The region spanning 1374–1610 is the ABC transporter domain; it reads IQFNKVSFAY…KGMFYDFVQI (237 aa). 1409–1416 provides a ligand contact to ATP; that stretch reads GPSGGGKS. The segment at 1621-1686 is disordered; it reads IQLPSNSRNT…SRSPPPMWRQ (66 aa). Basic and acidic residues predominate over residues 1631–1642; sequence RNADKLRNRSET. N-linked (GlcNAc...) asparagine glycans are attached at residues asparagine 1638, asparagine 1670, and asparagine 1694.

In the C-terminal section; belongs to the ABC transporter superfamily. ABCB family. Multidrug resistance exporter (TC 3.A.1.201) subfamily. This sequence in the N-terminal section; belongs to the peptidase S8 family.

Its subcellular location is the membrane. Functionally, required for a general cell fate determination at the onset of development. Required for the specification of an initial population of prespore cells in which tagA is expressed. Required for normal SDF-2 signaling during spore encapsulation. The polypeptide is Serine protease/ABC transporter B family protein tagA (tagA) (Dictyostelium discoideum (Social amoeba)).